Consider the following 444-residue polypeptide: MPILIVAVGVLILLFLIIKVKLNTFVSLIVVSFLVAIGLGMDINKIVLSIETGIGGQLGHLALVFGLGAMLGRLVSDAGGGYRIAITLIDKFGRKRIQAAVVVASFIIGIALFFEVGLVLLIPIVYAIAKELKMPFLYLGIPMAAALNVTHGFLPPHPAPTAISVAYGAHIGQVLLFGIIIAVPTTVIAGPLFNKFAMKRFPGAYQKHGNLSGLGPRKEFQLDETPGFAISAVTSLFPVIFMAMATIFSLLLSEHSKGKDIIEFIGTPGTAMLISLLLALYTMGYARKISMQEIGRSISESISQIAMMLLIIGGGGAFKQVLIDGGVGDYVADFFRQTNMSPLFVAWTIAAVLRLCLGSATVAALTTAGMAAPLMEAGSVNPALMVLATGAGSVIACHVNDAGFWMVKEFFGLSMKETFQTWTLLTTVLSVTGLGCVLLAGLVM.

The next 12 helical transmembrane spans lie at 2–22 (PILI…KVKL), 24–44 (TFVS…MDIN), 52–72 (TGIG…AMLG), 106–126 (FIIG…PIVY), 134–154 (MPFL…HGFL), 174–194 (VLLF…PLFN), 228–248 (FAIS…ATIF), 261–281 (IIEF…LALY), 305–325 (IAMM…LIDG), 343–363 (LFVA…ATVA), 377–397 (AGSV…VIAC), and 424–444 (LLTT…GLVM).

This sequence belongs to the GntP permease family.

It is found in the cell membrane. This is an uncharacterized protein from Bacillus subtilis (strain 168).